The chain runs to 1311 residues: Sterol regulatory element-binding protein cleavage-activating protein (1311 aa).

Residues 1-18 (MPLIDKLRERISRAFYSH) are Cytoplasmic-facing. The helical transmembrane segment at 19 to 39 (GLLCASYPIPIIILTALCILA) threads the bilayer. The Lumenal portion of the chain corresponds to 40–277 (SCYPLLKLPL…HIVHVHFKEE (238 aa)). The segment at 46-282 (KLPLPGTGPV…HFKEEIGIAE (237 aa)) is loop-1. N-linked (GlcNAc...) asparagine glycans are attached at residues asparagine 242 and asparagine 261. Residues 278 to 298 (IGIAELIPLVTTYIILFAYIY) form a helical membrane-spanning segment. One can recognise an SSD domain in the interval 282–440 (ELIPLVTTYI…MFFFTTVLSI (159 aa)). Topologically, residues 299 to 310 (FSTRKIDLVKSK) are cytoplasmic. Residues 311 to 331 (WGLALAAVVTVLSSLLMSVGL) traverse the membrane as a helical segment. Residues 332-342 (CTLFGLTPTLN) lie on the Lumenal side of the membrane. The chain crosses the membrane as a helical span at residues 343–363 (GGEIFPYLVVVIGLENVLVLT). Residues 364–399 (KSVVSTPVDLEVKLRIAQGLRNESWFIMKNMATELG) are Cytoplasmic-facing. A helical transmembrane segment spans residues 400 to 420 (IILIGYFTLVPAIQEFCLFAV). Residue valine 421 is a topological domain, lumenal. Residues 422 to 442 (GLVSDFFLQMFFFTTVLSIDI) form a helical membrane-spanning segment. Over 443-512 (RRMELADLNK…FFARTRLAQR (70 aa)) the chain is Cytoplasmic. Residues 445 to 450 (MELADL) carry the ER export signal motif. A helical transmembrane segment spans residues 513-533 (IIMAGTVVWIGILVYTDPAGL). The segment at 529–726 (DPAGLRNYLT…QTPADVTLYK (198 aa)) is loop-7. Topologically, residues 534–723 (RNYLTVHVTE…TENQTPADVT (190 aa)) are lumenal. Asparagine 583 and asparagine 651 each carry an N-linked (GlcNAc...) asparagine glycan. A helical membrane pass occupies residues 724–744 (LYKVAALGLASGIFLVLFFFL). At 745 to 1311 (LYRLLCPKNY…YVPSVLEKLD (567 aa)) the chain is on the cytoplasmic side. The interaction with srebf stretch occupies residues 747–1311 (RLLCPKNYGQ…YVPSVLEKLD (565 aa)). 7 WD repeats span residues 790-827 (GHHM…CLTI), 997-1034 (SFES…LRCS), 1037-1076 (DGQS…NQLQ), 1109-1146 (AHRK…CLFT), 1149-1187 (GHSG…RVSH), 1190-1227 (GHRG…KLYS), and 1230-1267 (QDLG…LLQT).

Belongs to the WD repeat SCAP family. As to quaternary structure, membrane region forms a homotetramer. Component of the SCAP-SREBP complex (composed of SCAP and srebf1/srebp1 or srebf2/srebp2). Forms a ternary complex with insig1 or insig2 through its transmembrane domains at high sterol concentrations. Interacts with the SEC23-SEC24 complex.

It is found in the endoplasmic reticulum membrane. The protein resides in the golgi apparatus membrane. Its subcellular location is the cytoplasmic vesicle. The protein localises to the COPII-coated vesicle membrane. Escort protein required for cholesterol as well as lipid homeostasis. Regulates export of the SCAP-SREBP complex from the endoplasmic reticulum to the Golgi upon low cholesterol, thereby regulating the processing of sterol regulatory element-binding proteins (SREBPs) SREBF1/SREBP1 and SREBF2/SREBP2. At high sterol concentrations, formation of a ternary complex with INSIG (INSIG1 or INSIG2) leads to mask the ER export signal in SCAP, promoting retention of the complex in the endoplasmic reticulum. Low sterol concentrations trigger release of INSIG, a conformational change in the SSD domain of SCAP, unmasking of the ER export signal, promoting recruitment into COPII-coated vesicles and transport of the SCAP-SREBP to the Golgi: in the Golgi, SREBPs are then processed, releasing the transcription factor fragment of SREBPs from the membrane, its import into the nucleus and up-regulation of LDLR, INSIG1 and the mevalonate pathway. Binds cholesterol via its SSD domain. This Xenopus laevis (African clawed frog) protein is Sterol regulatory element-binding protein cleavage-activating protein.